A 223-amino-acid chain; its full sequence is Phage shock protein A homolog (223 aa).

Positions 29–185 form a coiled coil; that stretch reads IDQALRDMRS…AGMEDRNKAM (157 aa).

Belongs to the PspA/Vipp/IM30 family.

In Deinococcus radiodurans (strain ATCC 13939 / DSM 20539 / JCM 16871 / CCUG 27074 / LMG 4051 / NBRC 15346 / NCIMB 9279 / VKM B-1422 / R1), this protein is Phage shock protein A homolog.